We begin with the raw amino-acid sequence, 301 residues long: tRNA U34 carboxymethyltransferase (301 aa).

Carboxy-S-adenosyl-L-methionine contacts are provided by residues Lys-70, Trp-84, Lys-89, Gly-108, Asp-130–Ser-132, Val-157–Glu-158, Tyr-177, and Arg-292.

It belongs to the class I-like SAM-binding methyltransferase superfamily. CmoB family. In terms of assembly, homotetramer.

The enzyme catalyses carboxy-S-adenosyl-L-methionine + 5-hydroxyuridine(34) in tRNA = 5-carboxymethoxyuridine(34) in tRNA + S-adenosyl-L-homocysteine + H(+). Its function is as follows. Catalyzes carboxymethyl transfer from carboxy-S-adenosyl-L-methionine (Cx-SAM) to 5-hydroxyuridine (ho5U) to form 5-carboxymethoxyuridine (cmo5U) at position 34 in tRNAs. The polypeptide is tRNA U34 carboxymethyltransferase (Sulfurovum sp. (strain NBC37-1)).